Reading from the N-terminus, the 221-residue chain is Enolase-phosphatase E1 (221 aa).

The protein belongs to the HAD-like hydrolase superfamily. MasA/MtnC family. Monomer. Mg(2+) is required as a cofactor.

The enzyme catalyses 5-methylsulfanyl-2,3-dioxopentyl phosphate + H2O = 1,2-dihydroxy-5-(methylsulfanyl)pent-1-en-3-one + phosphate. The protein operates within amino-acid biosynthesis; L-methionine biosynthesis via salvage pathway; L-methionine from S-methyl-5-thio-alpha-D-ribose 1-phosphate: step 3/6. It functions in the pathway amino-acid biosynthesis; L-methionine biosynthesis via salvage pathway; L-methionine from S-methyl-5-thio-alpha-D-ribose 1-phosphate: step 4/6. Functionally, bifunctional enzyme that catalyzes the enolization of 2,3-diketo-5-methylthiopentyl-1-phosphate (DK-MTP-1-P) into the intermediate 2-hydroxy-3-keto-5-methylthiopentenyl-1-phosphate (HK-MTPenyl-1-P), which is then dephosphorylated to form the acireductone 1,2-dihydroxy-3-keto-5-methylthiopentene (DHK-MTPene). This is Enolase-phosphatase E1 from Xanthobacter autotrophicus (strain ATCC BAA-1158 / Py2).